The chain runs to 429 residues: Glutamate-1-semialdehyde 2,1-aminomutase 2 (429 aa).

An N6-(pyridoxal phosphate)lysine modification is found at K268.

It belongs to the class-III pyridoxal-phosphate-dependent aminotransferase family. HemL subfamily. Homodimer. Requires pyridoxal 5'-phosphate as cofactor.

The protein resides in the cytoplasm. The catalysed reaction is (S)-4-amino-5-oxopentanoate = 5-aminolevulinate. It participates in porphyrin-containing compound metabolism; protoporphyrin-IX biosynthesis; 5-aminolevulinate from L-glutamyl-tRNA(Glu): step 2/2. This chain is Glutamate-1-semialdehyde 2,1-aminomutase 2, found in Halalkalibacterium halodurans (strain ATCC BAA-125 / DSM 18197 / FERM 7344 / JCM 9153 / C-125) (Bacillus halodurans).